Consider the following 101-residue polypeptide: NADH-quinone oxidoreductase subunit K (101 aa).

Helical transmembrane passes span 4 to 24 (LSDY…GIFV), 29 to 49 (IITL…NFVA), and 61 to 81 (IFVF…LAIL).

This sequence belongs to the complex I subunit 4L family. As to quaternary structure, NDH-1 is composed of 14 different subunits. Subunits NuoA, H, J, K, L, M, N constitute the membrane sector of the complex.

It is found in the cell inner membrane. The catalysed reaction is a quinone + NADH + 5 H(+)(in) = a quinol + NAD(+) + 4 H(+)(out). Its function is as follows. NDH-1 shuttles electrons from NADH, via FMN and iron-sulfur (Fe-S) centers, to quinones in the respiratory chain. The immediate electron acceptor for the enzyme in this species is believed to be ubiquinone. Couples the redox reaction to proton translocation (for every two electrons transferred, four hydrogen ions are translocated across the cytoplasmic membrane), and thus conserves the redox energy in a proton gradient. This Ruthia magnifica subsp. Calyptogena magnifica protein is NADH-quinone oxidoreductase subunit K.